A 451-amino-acid chain; its full sequence is MNTRVLTGITTTGTPHLGNYAGAIRPAIQASTQPGVDAFFFLADYHALIKCDDPARVARSRLELAATWLAAGLDPERVTFYRQSDIPEITELCWLLTCVTPKGLMNRAHAYKASVDQNAAKGVEPDDGVTMGLFSYPVLMAADILLFNANQVPVGRDQVQHLEMARDIAQRFNHLYGREFFVLPEVVIAEEVATLPGLDGRKMSKSYNNTIPLFEGGAAGLRNATQRIVTDSRLPGEPKDAEASHLYMLYRAFSTQQESMAFRRQLEEGMGWGDAKQALYERLERDLAPMRERYVELISNPGLIEDILQVGAAKARKLAQPLVRTLRDAVGLGVLQPAAAKAAQPARKAAKDARFVSFRDEDGSFRFRLLAADGEELLCSVPFANPKEAGALMRRLQDEAPEQALRGHDDVSYAAWLDGKEVAYGPQAADAGARDALLAKAREALAQLAAA.

Residues 10-12 (TTT) and 18-19 (GN) each bind ATP. The short motif at 11-19 (TTGTPHLGN) is the 'HIGH' region element. Asp143 contributes to the L-tryptophan binding site. ATP-binding positions include 155–157 (GRD), Leu195, and 202–206 (KMSKS). Residues 202-206 (KMSKS) carry the 'KMSKS' region motif.

It belongs to the class-I aminoacyl-tRNA synthetase family. Homodimer.

The protein localises to the cytoplasm. It catalyses the reaction tRNA(Trp) + L-tryptophan + ATP = L-tryptophyl-tRNA(Trp) + AMP + diphosphate + H(+). Catalyzes the attachment of tryptophan to tRNA(Trp). The sequence is that of Tryptophan--tRNA ligase from Bordetella pertussis (strain Tohama I / ATCC BAA-589 / NCTC 13251).